The primary structure comprises 110 residues: Large ribosomal subunit protein uL22 (110 aa).

Belongs to the universal ribosomal protein uL22 family. Part of the 50S ribosomal subunit.

Its function is as follows. This protein binds specifically to 23S rRNA; its binding is stimulated by other ribosomal proteins, e.g. L4, L17, and L20. It is important during the early stages of 50S assembly. It makes multiple contacts with different domains of the 23S rRNA in the assembled 50S subunit and ribosome. In terms of biological role, the globular domain of the protein is located near the polypeptide exit tunnel on the outside of the subunit, while an extended beta-hairpin is found that lines the wall of the exit tunnel in the center of the 70S ribosome. This Vibrio cholerae serotype O1 (strain ATCC 39541 / Classical Ogawa 395 / O395) protein is Large ribosomal subunit protein uL22.